A 451-amino-acid polypeptide reads, in one-letter code: MGRESVAVVTAPPSATAPGTASVATSLAPGFRFHPTDEELVSYYLKRKVLGQPVRFDAIGEVDIYKHEPWDLAVFSRLKTRDQEWYFYSALDKKYGNGARMNRATNRGYWKATGKDREIRRDILLLGMKKTLVFHSGRAPDGLRTNWVMHEYRLVEYETEKNGNLVQDAYVLCRVFHKNNIGPPSGNRYAPFMEEEWADDEGALIPGIDVKLRLEPPPVANGNDQMDQEIQSASKSLININEPPRETAPLDIESDQQNHHENDLKPEEHNNNNNYDENEETLKREQMEEEERPPRPVCVLNKEAPLPLLQYKRRRQSESNNNSSRNTQDHCSSTTTTVDNTTTLISSSAAATNTAISALLEFSLMGISDKKEKPQQPLRPHKEPLPPQTPLASPEEKVNDLQKEIHQMSVERETFKLEMMSAEAMISILQSRIDALRQENEELKKNNANGQ.

A disordered region spans residues Met-1–Ala-21. The 152-residue stretch at Leu-27–Lys-178 folds into the NAC domain. Residues Leu-126–Pro-184 mediate DNA binding. Disordered regions lie at residues Asp-255–Thr-337 and Lys-370–Asp-400. Basic and acidic residues predominate over residues Gln-256–Asn-270. The stretch at Asn-272 to Arg-292 forms a coiled coil. Low complexity predominate over residues Glu-318 to Thr-337. The segment covering Lys-370 to Pro-384 has biased composition (basic and acidic residues). Positions Val-398–Asn-446 form a coiled coil.

As to quaternary structure, interacts with JMJ14 and NAC050. Mostly expressed in floral organs, and, at low levels, in other organs.

It localises to the nucleus. Its function is as follows. Transcriptional repressor that binds to the motif 5'-(C/T)A(C/A)G-3' in the promoter of target genes. Also binds to the 5'-CTTGNNNNNCAAG-3' consensus sequence in chromatin. Can bind to the mitochondrial dysfunction motif (MDM) present in the upstream regions of mitochondrial dysfunction stimulon (MDS) genes involved in mitochondrial retrograde regulation (MRR). Together with NAC050 and JMJ14, regulates gene expression and flowering time by associating with the histone demethylase JMJ14, probably by the promotion of RNA-mediated gene silencing. Regulates siRNA-dependent post-transcriptional gene silencing (PTGS) through SGS3 expression modulation. Required during pollen development. This Arabidopsis thaliana (Mouse-ear cress) protein is NAC domain containing protein 52.